Here is a 422-residue protein sequence, read N- to C-terminus: Enolase (422 aa).

Glutamine 162 is a binding site for (2R)-2-phosphoglycerate. Glutamate 204 acts as the Proton donor in catalysis. Mg(2+) contacts are provided by aspartate 241, glutamate 285, and aspartate 312. Residues lysine 337, arginine 366, serine 367, and lysine 388 each coordinate (2R)-2-phosphoglycerate. The Proton acceptor role is filled by lysine 337.

This sequence belongs to the enolase family. Requires Mg(2+) as cofactor.

It is found in the cytoplasm. Its subcellular location is the secreted. The protein localises to the cell surface. The catalysed reaction is (2R)-2-phosphoglycerate = phosphoenolpyruvate + H2O. The protein operates within carbohydrate degradation; glycolysis; pyruvate from D-glyceraldehyde 3-phosphate: step 4/5. Its function is as follows. Catalyzes the reversible conversion of 2-phosphoglycerate (2-PG) into phosphoenolpyruvate (PEP). It is essential for the degradation of carbohydrates via glycolysis. The polypeptide is Enolase (Streptococcus thermophilus).